Reading from the N-terminus, the 183-residue chain is Peptide methionine sulfoxide reductase MsrA 1 (183 aa).

Cys-12 is a catalytic residue.

The protein belongs to the MsrA Met sulfoxide reductase family.

It carries out the reaction L-methionyl-[protein] + [thioredoxin]-disulfide + H2O = L-methionyl-(S)-S-oxide-[protein] + [thioredoxin]-dithiol. The catalysed reaction is [thioredoxin]-disulfide + L-methionine + H2O = L-methionine (S)-S-oxide + [thioredoxin]-dithiol. Functionally, has an important function as a repair enzyme for proteins that have been inactivated by oxidation. Catalyzes the reversible oxidation-reduction of methionine sulfoxide in proteins to methionine. The protein is Peptide methionine sulfoxide reductase MsrA 1 (msrA1) of Lactococcus lactis subsp. lactis (strain IL1403) (Streptococcus lactis).